Reading from the N-terminus, the 336-residue chain is Ketol-acid reductoisomerase (NADP(+)) (336 aa).

A KARI N-terminal Rossmann domain is found at 3–183; it reads AKMYYDRDVD…GCTKAGVLET (181 aa). NADP(+)-binding positions include 26–29, Arg49, Ser52, Ser54, and 84–87; these read YGSQ and DEQQ. His109 is a catalytic residue. Gly135 provides a ligand contact to NADP(+). The region spanning 184–329 is the KARI C-terminal knotted domain; it reads TFKEETETDL…KELRDQMPFI (146 aa). Mg(2+)-binding residues include Asp192, Glu196, Glu228, and Glu232. Ser253 is a binding site for substrate.

This sequence belongs to the ketol-acid reductoisomerase family. It depends on Mg(2+) as a cofactor.

The enzyme catalyses (2R)-2,3-dihydroxy-3-methylbutanoate + NADP(+) = (2S)-2-acetolactate + NADPH + H(+). The catalysed reaction is (2R,3R)-2,3-dihydroxy-3-methylpentanoate + NADP(+) = (S)-2-ethyl-2-hydroxy-3-oxobutanoate + NADPH + H(+). It participates in amino-acid biosynthesis; L-isoleucine biosynthesis; L-isoleucine from 2-oxobutanoate: step 2/4. It functions in the pathway amino-acid biosynthesis; L-valine biosynthesis; L-valine from pyruvate: step 2/4. Its function is as follows. Involved in the biosynthesis of branched-chain amino acids (BCAA). Catalyzes an alkyl-migration followed by a ketol-acid reduction of (S)-2-acetolactate (S2AL) to yield (R)-2,3-dihydroxy-isovalerate. In the isomerase reaction, S2AL is rearranged via a Mg-dependent methyl migration to produce 3-hydroxy-3-methyl-2-ketobutyrate (HMKB). In the reductase reaction, this 2-ketoacid undergoes a metal-dependent reduction by NADPH to yield (R)-2,3-dihydroxy-isovalerate. This Deinococcus radiodurans (strain ATCC 13939 / DSM 20539 / JCM 16871 / CCUG 27074 / LMG 4051 / NBRC 15346 / NCIMB 9279 / VKM B-1422 / R1) protein is Ketol-acid reductoisomerase (NADP(+)).